We begin with the raw amino-acid sequence, 508 residues long: Protein disulfide-isomerase (508 aa).

An N-terminal signal peptide occupies residues 1-17 (MLRRALLCLAVAALVRA). A Thioredoxin 1 domain is found at 18–134 (DAPEEEDHVL…IVNWLKKRTG (117 aa)). Residues Cys-53 and Cys-56 each act as nucleophile in the active site. Cys-53 and Cys-56 form a disulfide bridge. At Lys-200 the chain carries N6-acetyllysine. Lys-222 and Lys-271 each carry N6-succinyllysine. Phosphoserine is present on Ser-331. The Thioredoxin 2 domain maps to 349–475 (GKIKPHLMSQ…FKKFLESGGQ (127 aa)). Ser-357 carries the post-translational modification Phosphoserine; by FAM20C. Residues Cys-397 and Cys-400 each act as nucleophile in the active site. Cys-397 and Cys-400 are joined by a disulfide. Ser-427 is subject to Phosphoserine. Positions 471–508 (ESGGQDGAGDDDDLEDLEEAEEPDMEEDDDQKAVKDEL) are disordered. A compositionally biased stretch (acidic residues) spans 478-500 (AGDDDDLEDLEEAEEPDMEEDDD). A Prevents secretion from ER motif is present at residues 505–508 (KDEL).

Belongs to the protein disulfide isomerase family. In terms of assembly, heterodimer; heterodimerizes with the protein microsomal triglyceride transfer MTTP. Homodimer. Monomers and homotetramers may also occur. Interacts with P4HA2, forming a heterotetramer consisting of 2 alpha subunits (P4HA2) and 2 beta (P4HB), where P4HB plays the role of a structural subunit; this tetramer catalyzes the formation of 4-hydroxyproline in collagen. Also constitutes the structural subunit of the microsomal triacylglycerol transfer protein MTTP in mammalian cells. Stabilizes both enzymes and retain them in the ER without contributing to the catalytic activity. Binds UBQLN1. Interacts with ERO1B. Binds to CD4, and upon HIV-1 binding to the cell membrane, is part of a P4HB/PDI-CD4-CXCR4-gp120 complex. Interacts with ILDR2. Interacts with ERN1/IRE1A (via N-terminus); the interaction is enhanced by phosphorylation of P4HB by FAM20C in response to endoplasmic reticulum stress and results in attenuation of ERN1 activity. Post-translationally, phosphorylation of Ser-357 by FAM20C is induced by endoplasmic reticulum stress and results in a functional switch from oxidoreductase to molecular chaperone. It also promotes interaction with ERN1.

The protein localises to the endoplasmic reticulum. The protein resides in the endoplasmic reticulum lumen. It localises to the melanosome. It is found in the cell membrane. The catalysed reaction is Catalyzes the rearrangement of -S-S- bonds in proteins.. In terms of biological role, this multifunctional protein catalyzes the formation, breakage and rearrangement of disulfide bonds. At the cell surface, seems to act as a reductase that cleaves disulfide bonds of proteins attached to the cell. May therefore cause structural modifications of exofacial proteins. Inside the cell, seems to form/rearrange disulfide bonds of nascent proteins. At high concentrations and following phosphorylation by FAM20C, functions as a chaperone that inhibits aggregation of misfolded proteins. At low concentrations, facilitates aggregation (anti-chaperone activity). May be involved with other chaperones in the structural modification of the TG precursor in hormone biogenesis. Also acts as a structural subunit of various enzymes such as prolyl 4-hydroxylase and microsomal triacylglycerol transfer protein MTTP. Receptor for LGALS9; the interaction retains P4HB at the cell surface of Th2 T helper cells, increasing disulfide reductase activity at the plasma membrane, altering the plasma membrane redox state and enhancing cell migration. This Homo sapiens (Human) protein is Protein disulfide-isomerase (P4HB).